Consider the following 278-residue polypeptide: Pca operon regulatory protein (278 aa).

The HTH iclR-type domain maps to 31–91 (VAGISKGMAI…SDGHYFYLTP (61 aa)). The H-T-H motif DNA-binding region spans 53 to 72 (ITMAAEKTGMTRAAARRHLL). The 173-residue stretch at 106–278 (LPKISQPLLN…ETARELRNIL (173 aa)) folds into the IclR-ED domain.

In terms of biological role, activates transcription of the pca operon. The polypeptide is Pca operon regulatory protein (pcaU) (Acinetobacter baylyi (strain ATCC 33305 / BD413 / ADP1)).